Consider the following 96-residue polypeptide: RNA-binding protein Hfq (96 aa).

A Sm domain is found at 9-68 (DPFLNALRRERVPVSIYLVNGIKLQGQIESFDQFVILLKNTVSQMVYKHAISTVVPSRPV). Residues 64–96 (PSRPVSHHSNTGTNQAGTNYSGGNATQQDDVAE) form a disordered region. Over residues 70–96 (HHSNTGTNQAGTNYSGGNATQQDDVAE) the composition is skewed to polar residues.

This sequence belongs to the Hfq family. As to quaternary structure, homohexamer.

Its function is as follows. RNA chaperone that binds small regulatory RNA (sRNAs) and mRNAs to facilitate mRNA translational regulation in response to envelope stress, environmental stress and changes in metabolite concentrations. Also binds with high specificity to tRNAs. This Proteus mirabilis (strain HI4320) protein is RNA-binding protein Hfq.